The primary structure comprises 306 residues: Probable rRNA-processing protein EBP2 (306 aa).

The residue at position 1 (Met-1) is an N-acetylmethionine. 3 disordered regions span residues Met-1 to Asp-20, Gly-75 to Gln-103, and Ile-150 to Gln-169. Thr-3 bears the Phosphothreonine mark. Phosphoserine is present on residues Ser-7, Ser-9, Ser-11, and Ser-13. Polar residues predominate over residues Ser-81 to Gln-90. Basic and acidic residues predominate over residues Asp-91 to Gln-103. Residue Lys-93 forms a Glycyl lysine isopeptide (Lys-Gly) (interchain with G-Cter in SUMO2) linkage. Positions Asp-135–Arg-171 form a coiled coil. Glycyl lysine isopeptide (Lys-Gly) (interchain with G-Cter in SUMO2) cross-links involve residues Lys-179 and Lys-218. Over residues Leu-213 to Ala-224 the composition is skewed to basic and acidic residues. The tract at residues Leu-213–Arg-306 is disordered. Phosphoserine occurs at positions 264 and 270. The span at Lys-274 to Arg-306 shows a compositional bias: basic residues.

The protein belongs to the EBP2 family. Interacts with WDR46.

The protein resides in the nucleus. The protein localises to the nucleolus. Required for the processing of the 27S pre-rRNA. This is Probable rRNA-processing protein EBP2 (Ebna1bp2) from Mus musculus (Mouse).